The primary structure comprises 837 residues: Striatin-interacting protein 1 (837 aa).

The residue at position 1 (Met1) is an N-acetylmethionine. 2 disordered regions span residues 1–66 (MEPA…SESP) and 333–423 (AASP…KGLP). Positions 18-35 (PQPPPPPPPATAQPPPGA) are enriched in pro residues. Over residues 47–60 (KAREFNRNQRKDSE) the composition is skewed to basic and acidic residues. Residues Ser59, Ser335, and Ser339 each carry the phosphoserine modification. Positions 356 to 377 (KALIKQDNLDAFNERDPYKADD) are enriched in basic and acidic residues. Residues 378–391 (SREEEEENDDDNSL) show a composition bias toward acidic residues. The residue at position 788 (Ser788) is a Phosphoserine. The tract at residues 796–837 (DNCLQSVLGQRVDLPEDFQMNYDLWLEREVFSKPISWEELLQ) is required for STRIPAK core complex formation.

This sequence belongs to the STRIP family. Part of the core of STRIPAK complexes composed of PP2A catalytic and scaffolding subunits, the striatins (PP2A regulatory subunits), the striatin-associated proteins MOB4, STRIP1 and STRIP2, PDCD10 and members of the STE20 kinases, such as STK24 and STK26. The STRIPAK complex can be extended by adapter proteins such as SLMAP:SIKE1, CTTNBP2 or CTTNBP2NL. Interacts with CDC42BPB. Interacts with CTTNBP2NL.

Its subcellular location is the cytoplasm. Plays a role in the regulation of cell morphology and cytoskeletal organization. Required in the cortical actin filament dynamics and cell shape. Part of the striatin-interacting phosphatase and kinase (STRIPAK) complexes. STRIPAK complexes have critical roles in protein (de)phosphorylation and are regulators of multiple signaling pathways including Hippo, MAPK, nuclear receptor and cytoskeleton remodeling. Different types of STRIPAK complexes are involved in a variety of biological processes such as cell growth, differentiation, apoptosis, metabolism and immune regulation. The sequence is that of Striatin-interacting protein 1 (STRIP1) from Macaca fascicularis (Crab-eating macaque).